A 534-amino-acid chain; its full sequence is Probable protein kinase UbiB (534 aa).

A helical membrane pass occupies residues 23–43 (DLLFALPLPWFLLAVRYVLPW). Residues 125–492 (RFDVDPLASA…WKKRKDDWFL (368 aa)) form the Protein kinase domain. Residues 131–139 (LASASVAQV) and K153 each bind ATP. The active-site Proton acceptor is the D288. A run of 2 helical transmembrane segments spans residues 490–510 (WFLR…AIGG) and 512–532 (LNQL…YLIV).

Belongs to the ABC1 family. UbiB subfamily.

Its subcellular location is the cell inner membrane. It participates in cofactor biosynthesis; ubiquinone biosynthesis [regulation]. Its function is as follows. Is probably a protein kinase regulator of UbiI activity which is involved in aerobic coenzyme Q (ubiquinone) biosynthesis. The protein is Probable protein kinase UbiB of Pseudomonas fluorescens (strain SBW25).